An 87-amino-acid polypeptide reads, in one-letter code: uncharacterized protein (87 aa).

A run of 2 helical transmembrane segments spans residues 7–27 (LFFIQIVISIFNSHLAVLYSI) and 64–84 (GINIFSFSISLFLIFLTIPLF).

The protein localises to the membrane. This is an uncharacterized protein from Schizosaccharomyces pombe (strain 972 / ATCC 24843) (Fission yeast).